Reading from the N-terminus, the 239-residue chain is Probable 2-phosphosulfolactate phosphatase (239 aa).

It belongs to the ComB family. Requires Mg(2+) as cofactor.

It carries out the reaction (2R)-O-phospho-3-sulfolactate + H2O = (2R)-3-sulfolactate + phosphate. In Clostridium botulinum (strain Langeland / NCTC 10281 / Type F), this protein is Probable 2-phosphosulfolactate phosphatase.